The primary structure comprises 661 residues: UvrABC system protein C (661 aa).

The GIY-YIG domain occupies 26–105 (AEPGCYLMRD…IKNHQPHFNV (80 aa)). The 36-residue stretch at 215–250 (DELQNLLQEQMHKYADRTDYESAARVRDQLQGLDQL) folds into the UVR domain.

Belongs to the UvrC family. In terms of assembly, interacts with UvrB in an incision complex.

Its subcellular location is the cytoplasm. Functionally, the UvrABC repair system catalyzes the recognition and processing of DNA lesions. UvrC both incises the 5' and 3' sides of the lesion. The N-terminal half is responsible for the 3' incision and the C-terminal half is responsible for the 5' incision. The chain is UvrABC system protein C from Synechococcus sp. (strain CC9902).